Reading from the N-terminus, the 427-residue chain is MSVSFENKETNRGVLTFTISQDQIKPELDRVFKSVKKSLNVPGFRKGHLPRPIFDKKFGEESLYQDVMNALLPNAYEAAVKEAGLEVVAQPKIDVTSMEKGQDWVITAEVVTKPEVKLGDYKNLEVSVDVEKEVTDADVEERIERERNNLAELVIKEAAAENGDTVVIDFVGSIDGVEFDGGKGENFSLGLGSGQFIPGFEDQLVGHSAGETVDVIVTFPEDYQAEDLAGKEAQFVTTIHEVKAKEVPALDDELAKDIDEEVETLADLKEKYRKELAAAKEEAYKDAVEGAAIDTAVENAEIVELPEEMIHEEVHRSVNEFLGNLQRQGINPDMYFQITGTTQEDLHNQYQAEAESRTKTNLVIEAVAKAEGFDASEEEIQKEVEQLAADYNMEVAQVQNLLSADMLKHDITIKKAVELITSTATVK.

The 86-residue stretch at 163-248 folds into the PPIase FKBP-type domain; it reads GDTVVIDFVG…IHEVKAKEVP (86 aa).

Belongs to the FKBP-type PPIase family. Tig subfamily.

The protein resides in the cytoplasm. The catalysed reaction is [protein]-peptidylproline (omega=180) = [protein]-peptidylproline (omega=0). In terms of biological role, involved in protein export. Acts as a chaperone by maintaining the newly synthesized protein in an open conformation. Functions as a peptidyl-prolyl cis-trans isomerase. The chain is Trigger factor from Streptococcus pneumoniae (strain Hungary19A-6).